A 164-amino-acid polypeptide reads, in one-letter code: Transcription elongation factor GreA (164 aa).

This sequence belongs to the GreA/GreB family.

Necessary for efficient RNA polymerase transcription elongation past template-encoded arresting sites. The arresting sites in DNA have the property of trapping a certain fraction of elongating RNA polymerases that pass through, resulting in locked ternary complexes. Cleavage of the nascent transcript by cleavage factors such as GreA or GreB allows the resumption of elongation from the new 3'terminus. GreA releases sequences of 2 to 3 nucleotides. In Helicobacter pylori (strain J99 / ATCC 700824) (Campylobacter pylori J99), this protein is Transcription elongation factor GreA.